The primary structure comprises 345 residues: tRNA N6-adenosine threonylcarbamoyltransferase (345 aa).

Fe cation-binding residues include histidine 111 and histidine 115. Residues 134-138 (LVSGG), aspartate 167, glycine 180, and asparagine 276 contribute to the substrate site. Residue aspartate 304 participates in Fe cation binding.

It belongs to the KAE1 / TsaD family. Fe(2+) serves as cofactor.

Its subcellular location is the cytoplasm. It catalyses the reaction L-threonylcarbamoyladenylate + adenosine(37) in tRNA = N(6)-L-threonylcarbamoyladenosine(37) in tRNA + AMP + H(+). Required for the formation of a threonylcarbamoyl group on adenosine at position 37 (t(6)A37) in tRNAs that read codons beginning with adenine. Is involved in the transfer of the threonylcarbamoyl moiety of threonylcarbamoyl-AMP (TC-AMP) to the N6 group of A37, together with TsaE and TsaB. TsaD likely plays a direct catalytic role in this reaction. The polypeptide is tRNA N6-adenosine threonylcarbamoyltransferase (Alcanivorax borkumensis (strain ATCC 700651 / DSM 11573 / NCIMB 13689 / SK2)).